The following is a 95-amino-acid chain: Aspartyl/glutamyl-tRNA(Asn/Gln) amidotransferase subunit C (95 aa).

Belongs to the GatC family. As to quaternary structure, heterotrimer of A, B and C subunits.

It catalyses the reaction L-glutamyl-tRNA(Gln) + L-glutamine + ATP + H2O = L-glutaminyl-tRNA(Gln) + L-glutamate + ADP + phosphate + H(+). The catalysed reaction is L-aspartyl-tRNA(Asn) + L-glutamine + ATP + H2O = L-asparaginyl-tRNA(Asn) + L-glutamate + ADP + phosphate + 2 H(+). Functionally, allows the formation of correctly charged Asn-tRNA(Asn) or Gln-tRNA(Gln) through the transamidation of misacylated Asp-tRNA(Asn) or Glu-tRNA(Gln) in organisms which lack either or both of asparaginyl-tRNA or glutaminyl-tRNA synthetases. The reaction takes place in the presence of glutamine and ATP through an activated phospho-Asp-tRNA(Asn) or phospho-Glu-tRNA(Gln). This Ruthia magnifica subsp. Calyptogena magnifica protein is Aspartyl/glutamyl-tRNA(Asn/Gln) amidotransferase subunit C.